A 1170-amino-acid polypeptide reads, in one-letter code: Disease resistance protein LAZ5 (1170 aa).

The TIR domain maps to 10–172 (ESWQVFINFR…KIIDSIKKVL (163 aa)). The active site involves E84. Residues 193–219 (EAKNVDTFSPNSSDFPSTSIDDDLSIN) are disordered. A compositionally biased stretch (polar residues) spans 198–219 (DTFSPNSSDFPSTSIDDDLSIN). The 253-residue stretch at 261–513 (RLKEMEEKLD…DVACFFKSEN (253 aa)) folds into the NB-ARC domain. 12 LRR repeats span residues 595–616 (MENV…TFDG), 622–645 (MCNL…IFKF), 646–670 (DTVR…PWEK), 677–700 (PENL…VKDT), 723–747 (AKNL…MENM), 761–785 (LTCL…KLEE), 790–813 (SENL…AGDL), 815–837 (RLVV…LGKQ), 838–861 (KALQ…VKDM), 862–885 (KHLR…SLKC), 888–904 (LSRN…LKDF), and 905–930 (SNLK…CLEY).

The catalysed reaction is NAD(+) + H2O = ADP-D-ribose + nicotinamide + H(+). Its function is as follows. TIR-NB-LRR receptor-like protein that may play a role in plant innate immunity. May trigger hypersensitive programmed cell death in response to pathogen attack. Involved in tolerance to tobacco ringspot virus (TRSV). The protein is Disease resistance protein LAZ5 of Arabidopsis thaliana (Mouse-ear cress).